Here is a 420-residue protein sequence, read N- to C-terminus: Protein maelstrom homolog (420 aa).

Positions 4–73 (RRASRNAYYF…AQGKDSGPSE (70 aa)) form a DNA-binding region, HMG box. 3 disordered regions span residues 62–94 (RAAQ…KQNV), 341–372 (GFSH…GQNS), and 392–420 (NIHK…SSLS). Polar residues-rich tracts occupy residues 344–358 (HFSS…NTPT) and 392–407 (NIHK…SPYT).

This sequence belongs to the maelstrom family. As to quaternary structure, interacts with SMARCB1, SIN3B and DDX4. Interacts with piRNA-associated proteins TDRD1, PIWIL1 and PIWIL2. Interacts with TEX19.

It is found in the cytoplasm. The protein resides in the nucleus. In terms of biological role, plays a central role during spermatogenesis by repressing transposable elements and preventing their mobilization, which is essential for the germline integrity. Acts via the piRNA metabolic process, which mediates the repression of transposable elements during meiosis by forming complexes composed of piRNAs and Piwi proteins and governs the methylation and subsequent repression of transposons. Its association with piP-bodies suggests a participation in the secondary piRNAs metabolic process. Required for the localization of germ-cell factors to the meiotic nuage. This is Protein maelstrom homolog (MAEL) from Bos taurus (Bovine).